A 163-amino-acid polypeptide reads, in one-letter code: Protein-export protein SecB (163 aa).

Belongs to the SecB family. Homotetramer, a dimer of dimers. One homotetramer interacts with 1 SecA dimer.

Its subcellular location is the cytoplasm. One of the proteins required for the normal export of preproteins out of the cell cytoplasm. It is a molecular chaperone that binds to a subset of precursor proteins, maintaining them in a translocation-competent state. It also specifically binds to its receptor SecA. This chain is Protein-export protein SecB, found in Brucella abortus (strain S19).